The chain runs to 533 residues: MVVKPAARGMKPQGQAYKDKSKPADIRQSNINAAKAVSDAIRTSLGPRGMDKMIQAANGEVTITNDGATILKQMNVIHPAAKMLVELSRAQDVEAGDGTTSVVVVAGALLKAVEKLLQMGIHPTAISDAFQKCSAKAVDILTEMSTPIELTDRESLVKSASTSLNSKVVSQHSSQLAPIAVEAVLKVTEAGHESGVDLKNVKIIRSLGGTIDDTELVDGLVFTQRSCGVNGPKRVEKAKIGLIQFCISAPKTDMDHSVIVSDYAAMDRVLKEERAYILNIVKQIKKAGCNVLLVQKSILRDAVSDLAMHFLDKIKVMVVKDIEHEDIEFVCKTLNCRPIASLDHFLPEHLVNADLVEEVSSGSSKFVKVTGIQNMGQTVSIVVRGSNKLVLEEAERSLHDALCVVRCLVKKRAQIAGGGAPEIEMAIQLAAHAQTLEGVDAYCFRAFANALEVIPSTLAENAGLNPIATVTELRNRHAQGEKNAGINVRKGAITDILAENVVQPLLVSTSSITLASETVRSILKIDDIINTMQ.

A disordered region spans residues 1-24 (MVVKPAARGMKPQGQAYKDKSKPA).

The protein belongs to the TCP-1 chaperonin family. As to quaternary structure, heterooligomeric complex of about 850 to 900 kDa that forms two stacked rings, 12 to 16 nm in diameter.

It localises to the cytoplasm. Its function is as follows. Molecular chaperone; assists the folding of proteins upon ATP hydrolysis. Known to play a role, in vitro, in the folding of actin and tubulin. The polypeptide is T-complex protein 1 subunit delta (Ochlerotatus triseriatus (Eastern treehole mosquito)).